A 542-amino-acid polypeptide reads, in one-letter code: CTP synthase (542 aa).

The amidoligase domain stretch occupies residues 1 to 265 (MTRYIFVTGG…DDFVVERFGL (265 aa)). S13 lines the CTP pocket. S13 provides a ligand contact to UTP. ATP contacts are provided by residues 14–19 (SLGKGI) and D71. D71 and E139 together coordinate Mg(2+). Residues 146 to 148 (DIE), 186 to 191 (KTKPTQ), and K222 contribute to the CTP site. UTP-binding positions include 186–191 (KTKPTQ) and K222. The 252-residue stretch at 290–541 (TIAMVGKYME…VKAALAQKNK (252 aa)) folds into the Glutamine amidotransferase type-1 domain. G351 contributes to the L-glutamine binding site. C378 functions as the Nucleophile; for glutamine hydrolysis in the catalytic mechanism. Residues 379 to 382 (LGMQ), E402, and R469 each bind L-glutamine. Active-site residues include H514 and E516.

Belongs to the CTP synthase family. In terms of assembly, homotetramer.

The catalysed reaction is UTP + L-glutamine + ATP + H2O = CTP + L-glutamate + ADP + phosphate + 2 H(+). The enzyme catalyses L-glutamine + H2O = L-glutamate + NH4(+). It carries out the reaction UTP + NH4(+) + ATP = CTP + ADP + phosphate + 2 H(+). It functions in the pathway pyrimidine metabolism; CTP biosynthesis via de novo pathway; CTP from UDP: step 2/2. Its activity is regulated as follows. Allosterically activated by GTP, when glutamine is the substrate; GTP has no effect on the reaction when ammonia is the substrate. The allosteric effector GTP functions by stabilizing the protein conformation that binds the tetrahedral intermediate(s) formed during glutamine hydrolysis. Inhibited by the product CTP, via allosteric rather than competitive inhibition. Its function is as follows. Catalyzes the ATP-dependent amination of UTP to CTP with either L-glutamine or ammonia as the source of nitrogen. Regulates intracellular CTP levels through interactions with the four ribonucleotide triphosphates. The sequence is that of CTP synthase from Pseudomonas putida (strain ATCC 700007 / DSM 6899 / JCM 31910 / BCRC 17059 / LMG 24140 / F1).